A 495-amino-acid chain; its full sequence is Homeobox protein ceh-21 (495 aa).

The segment covering 1 to 14 has biased composition (polar residues); the sequence is MSQQFQASSGTGSA. 2 disordered regions span residues 1–24 and 89–267; these read MSQQFQASSGTGSASLREFKTEHE and TAES…PGGE. Basic and acidic residues predominate over residues 106–120; it reads LEEKSDKSSDGDGTS. Positions 132–145 are enriched in acidic residues; it reads NETEEDHEEKEDEA. Basic and acidic residues predominate over residues 149–162; it reads SRRESTRLKRKLLE. 2 stretches are compositionally biased toward polar residues: residues 163-179 and 199-217; these read SQKTVQTTGNSSRASSK and TPEQSKAATKRQSSTTVRA. A compositionally biased stretch (low complexity) spans 218 to 233; that stretch reads SSTCGSSVSSTSTVSS. The segment covering 242-254 has biased composition (basic and acidic residues); that stretch reads RATETPKLEELAP. The segment at residues 284 to 370 is a DNA-binding region (CUT); sequence NAQIGDDEEL…VRRALCFLPK (87 aa). The segment at residues 389-449 is a DNA-binding region (homeobox); that stretch reads KTVKVIRLTF…MNSRRRLRID (61 aa). The tract at residues 450–473 is disordered; sequence QQISRSSRSTGNGADTEDELDEED. The segment covering 464–473 has biased composition (acidic residues); the sequence is DTEDELDEED.

The protein belongs to the CUT homeobox family.

The protein resides in the nucleus. Functionally, probable DNA-binding regulatory protein involved in cell-fate specification. The protein is Homeobox protein ceh-21 (ceh-21) of Caenorhabditis elegans.